The chain runs to 266 residues: Ciliary microtubule inner protein 4 (266 aa).

2 stretches are compositionally biased toward polar residues: residues 1 to 15 and 24 to 38; these read MELSHRQGTTTLTRT and QDMNSFRANHSSLDN. Residues 1 to 124 are disordered; sequence MELSHRQGTT…SPEQRTVPLS (124 aa). A compositionally biased stretch (low complexity) spans 47-63; sequence LSQSPLGSSLGQGYLET. The segment covering 81 to 102 has biased composition (basic and acidic residues); that stretch reads HPEDLKKGASRSSSRDARETFR.

In terms of tissue distribution, only detected in testis, in the spermatids and sperm within the seminiferous tubules (at protein level).

The protein localises to the cytoplasmic vesicle. Its subcellular location is the secretory vesicle. The protein resides in the acrosome. It is found in the cell projection. It localises to the cilium. The protein localises to the flagellum. Its function is as follows. Seems to be associated with spermiogenesis but is not essential for sperm development and male fertility. This is Ciliary microtubule inner protein 4 (Cimip4) from Mus musculus (Mouse).